Here is an 870-residue protein sequence, read N- to C-terminus: Outer membrane usher protein FimD (870 aa).

Residues 1–27 (MKKTTWFAGRFPGYVSPLSSVALSVLA) form the signal peptide. The cysteines at positions 843 and 865 are disulfide-linked.

It belongs to the fimbrial export usher family.

It is found in the cell outer membrane. Its function is as follows. Involved in the export and assembly of FimA fimbrial subunits across the outer membrane. The chain is Outer membrane usher protein FimD (fimD) from Salmonella typhimurium (strain LT2 / SGSC1412 / ATCC 700720).